The following is a 97-amino-acid chain: ESAT-6-like protein EsxS (97 aa).

The protein belongs to the WXG100 family. CFP-10 subfamily. In terms of assembly, forms a tight complex with EsxR. Exists in heterodimeric and heterotetrameric forms.

The protein resides in the secreted. The polypeptide is ESAT-6-like protein EsxS (Mycobacterium tuberculosis (strain ATCC 25618 / H37Rv)).